We begin with the raw amino-acid sequence, 890 residues long: Nucleoside hydrolase 3 (890 aa).

Residues 1–21 (MLTSPTLKSLWFLFTILGLLG) form the signal peptide. 7 N-linked (GlcNAc...) asparagine glycosylation sites follow: asparagine 55, asparagine 232, asparagine 371, asparagine 485, asparagine 580, asparagine 655, and asparagine 740.

The protein belongs to the IUNH family.

It localises to the secreted. It is found in the extracellular space. The protein localises to the apoplast. It carries out the reaction a purine D-ribonucleoside + H2O = a purine nucleobase + D-ribose. It catalyses the reaction inosine + H2O = hypoxanthine + D-ribose. The catalysed reaction is adenosine + H2O = D-ribose + adenine. Functionally, extracellular purine-specific hydrolase present in the apoplastic fluid involved in the degradation of extracellular nucleosides, including inosine and adenosine, and which may participate in wound and pathogen responses (e.g. Botrytis cinerea). The chain is Nucleoside hydrolase 3 from Arabidopsis thaliana (Mouse-ear cress).